Consider the following 424-residue polypeptide: Riboflavin biosynthesis protein RibBA (424 aa).

A DHBP synthase region spans residues 1–206 (MFTCEAGIAS…VDDLITYRYT (206 aa)). D-ribulose 5-phosphate contacts are provided by residues 32–33 (RE), Asp37, 145–149 (RPGHT), and Glu169. Glu33 provides a ligand contact to Mg(2+). His148 contacts Mg(2+). The tract at residues 207–424 (YDSLVTKISS…YETVERMSCR (218 aa)) is GTP cyclohydrolase II. 257–261 (RVHSE) is a GTP binding site. Positions 262, 273, and 275 each coordinate Zn(2+). GTP is bound by residues Gln278, 301-303 (EGR), and Thr323. Asp335 functions as the Proton acceptor; for GTP cyclohydrolase activity in the catalytic mechanism. Arg337 serves as the catalytic Nucleophile; for GTP cyclohydrolase activity. GTP contacts are provided by Thr358 and Lys363.

This sequence in the N-terminal section; belongs to the DHBP synthase family. The protein in the C-terminal section; belongs to the GTP cyclohydrolase II family. Mg(2+) is required as a cofactor. It depends on Mn(2+) as a cofactor. Requires Zn(2+) as cofactor.

It carries out the reaction D-ribulose 5-phosphate = (2S)-2-hydroxy-3-oxobutyl phosphate + formate + H(+). The enzyme catalyses GTP + 4 H2O = 2,5-diamino-6-hydroxy-4-(5-phosphoribosylamino)-pyrimidine + formate + 2 phosphate + 3 H(+). It functions in the pathway cofactor biosynthesis; riboflavin biosynthesis; 2-hydroxy-3-oxobutyl phosphate from D-ribulose 5-phosphate: step 1/1. It participates in cofactor biosynthesis; riboflavin biosynthesis; 5-amino-6-(D-ribitylamino)uracil from GTP: step 1/4. Functionally, catalyzes the conversion of D-ribulose 5-phosphate to formate and 3,4-dihydroxy-2-butanone 4-phosphate. Catalyzes the conversion of GTP to 2,5-diamino-6-ribosylamino-4(3H)-pyrimidinone 5'-phosphate (DARP), formate and pyrophosphate. The chain is Riboflavin biosynthesis protein RibBA from Chlamydia trachomatis serovar D (strain ATCC VR-885 / DSM 19411 / UW-3/Cx).